A 599-amino-acid polypeptide reads, in one-letter code: DNA primase (599 aa).

Residues 38–62 (CPFHQEKTPSFTVSDSKRFFYCFGC) form a CHC2-type zinc finger. The 83-residue stretch at 250 to 332 (NYSILVEGYF…EKKISFIRLP (83 aa)) folds into the Toprim domain. Mg(2+)-binding residues include Glu-256, Asp-300, and Asp-302.

This sequence belongs to the DnaG primase family. As to quaternary structure, monomer. Interacts with DnaB. It depends on Zn(2+) as a cofactor. Requires Mg(2+) as cofactor.

It catalyses the reaction ssDNA + n NTP = ssDNA/pppN(pN)n-1 hybrid + (n-1) diphosphate.. RNA polymerase that catalyzes the synthesis of short RNA molecules used as primers for DNA polymerase during DNA replication. The protein is DNA primase of Rickettsia bellii (strain RML369-C).